A 325-amino-acid polypeptide reads, in one-letter code: Plasminogen (325 aa).

Kringle domains are found at residues 80–146 (ACVK…VPSC) and 159–217 (LTPA…VLSV). 4 cysteine pairs are disulfide-bonded: cysteine 81/cysteine 146, cysteine 102/cysteine 135, cysteine 124/cysteine 141, and cysteine 188/cysteine 212.

It belongs to the peptidase S1 family. Plasminogen subfamily.

It localises to the secreted. It catalyses the reaction Preferential cleavage: Lys-|-Xaa &gt; Arg-|-Xaa, higher selectivity than trypsin. Converts fibrin into soluble products.. In terms of biological role, plasmin dissolves the fibrin of blood clots and acts as a proteolytic factor in a variety of other processes including embryonic development, tissue remodeling, tumor invasion, and inflammation. This chain is Plasminogen, found in Petromyzon marinus (Sea lamprey).